The primary structure comprises 134 residues: UPF0412 protein YaaI (134 aa).

A signal peptide spans 1 to 23 (MRSVLTISVGLLFGLALSSVAHA).

The protein belongs to the UPF0412 family.

This is UPF0412 protein YaaI from Salmonella typhimurium (strain LT2 / SGSC1412 / ATCC 700720).